Reading from the N-terminus, the 641-residue chain is Leucine-rich repeat receptor-like serine/threonine/tyrosine-protein kinase SOBIR1 (641 aa).

Residues M1–S31 form the signal peptide. At V32–V284 the chain is on the extracellular side. LRR repeat units lie at residues E112 to S133, Q136 to S159, R160 to R182, N183 to F205, and N207 to S228. N154 carries N-linked (GlcNAc...) asparagine glycosylation. The N-linked (GlcNAc...) asparagine glycan is linked to N186. The interval A243–K278 is disordered. Positions T245–T259 are enriched in polar residues. A glycan (N-linked (GlcNAc...) asparagine) is linked at N256. Over residues S260–P269 the composition is skewed to low complexity. A helical membrane pass occupies residues A285–F305. Topologically, residues S306–H641 are cytoplasmic. The Protein kinase domain occupies L347–H641. Residues I353–V361 and K377 contribute to the ATP site. The active-site Proton acceptor is the D489.

This sequence belongs to the protein kinase superfamily. Ser/Thr protein kinase family. As to quaternary structure, interacts with CST. Interacts with RLP23. Component of a trimeric complex composed of RLP23, SOBIR1 and BAK1. BAK1 is recruited into a pre-formed RLP23-SOBIR1 complex in a ligand-dependent manner. Post-translationally, autophosphorylated on Ser, Thr and Tyr residues. In terms of tissue distribution, mostly present in leaves and flowers, with increasing expression in older flowers.

It is found in the cell membrane. It carries out the reaction L-seryl-[protein] + ATP = O-phospho-L-seryl-[protein] + ADP + H(+). It catalyses the reaction L-threonyl-[protein] + ATP = O-phospho-L-threonyl-[protein] + ADP + H(+). The catalysed reaction is L-tyrosyl-[protein] + ATP = O-phospho-L-tyrosyl-[protein] + ADP + H(+). In terms of biological role, dual specificity kinase acting on both serine/threonine- and tyrosine-containing substrates. Acting as a counterplayer of BIR1, promotes the activation of plant defense and cell death. Component of the RLP23-SOBIR1-BAK1 complex that mediates NLP-triggered immunity. Functions as an inhibitor/regulator of abscission, probably by regulating membrane trafficking during abscission. The sequence is that of Leucine-rich repeat receptor-like serine/threonine/tyrosine-protein kinase SOBIR1 (SOBIR1) from Arabidopsis thaliana (Mouse-ear cress).